The chain runs to 175 residues: Ribosome maturation factor RimM (175 aa).

The region spanning glutamate 96 to phenylalanine 175 is the PRC barrel domain.

Belongs to the RimM family. As to quaternary structure, binds ribosomal protein uS19.

The protein resides in the cytoplasm. In terms of biological role, an accessory protein needed during the final step in the assembly of 30S ribosomal subunit, possibly for assembly of the head region. Essential for efficient processing of 16S rRNA. May be needed both before and after RbfA during the maturation of 16S rRNA. It has affinity for free ribosomal 30S subunits but not for 70S ribosomes. The sequence is that of Ribosome maturation factor RimM from Histophilus somni (strain 129Pt) (Haemophilus somnus).